A 430-amino-acid polypeptide reads, in one-letter code: GTPase Obg (430 aa).

The region spanning 1-158 (MFVDQVKINV…IELQLELKVL (158 aa)) is the Obg domain. The tract at residues 122 to 143 (GGRGNMRFASPRNPAPEISENG) is disordered. The OBG-type G domain maps to 159 to 334 (ADVGLLGFPS…LVARTADVLE (176 aa)). GTP-binding positions include 165–172 (GFPSVGKS), 190–194 (FTTLV), 212–215 (DIPG), 282–285 (TKMD), and 315–317 (SSI). 2 residues coordinate Mg(2+): Ser172 and Thr192. The 78-residue stretch at 353-430 (YEFSSEKDFT…ILDFVFEFVE (78 aa)) folds into the OCT domain.

Belongs to the TRAFAC class OBG-HflX-like GTPase superfamily. OBG GTPase family. As to quaternary structure, monomer. Mg(2+) serves as cofactor.

It localises to the cytoplasm. Functionally, an essential GTPase which binds GTP, GDP and possibly (p)ppGpp with moderate affinity, with high nucleotide exchange rates and a fairly low GTP hydrolysis rate. Plays a role in control of the cell cycle, stress response, ribosome biogenesis and in those bacteria that undergo differentiation, in morphogenesis control. The polypeptide is GTPase Obg (Pediococcus pentosaceus (strain ATCC 25745 / CCUG 21536 / LMG 10740 / 183-1w)).